Consider the following 371-residue polypeptide: 4-hydroxy-3-methylbut-2-en-1-yl diphosphate synthase (flavodoxin) (371 aa).

4 residues coordinate [4Fe-4S] cluster: cysteine 270, cysteine 273, cysteine 305, and glutamate 312.

It belongs to the IspG family. [4Fe-4S] cluster is required as a cofactor.

It carries out the reaction (2E)-4-hydroxy-3-methylbut-2-enyl diphosphate + oxidized [flavodoxin] + H2O + 2 H(+) = 2-C-methyl-D-erythritol 2,4-cyclic diphosphate + reduced [flavodoxin]. The protein operates within isoprenoid biosynthesis; isopentenyl diphosphate biosynthesis via DXP pathway; isopentenyl diphosphate from 1-deoxy-D-xylulose 5-phosphate: step 5/6. Functionally, converts 2C-methyl-D-erythritol 2,4-cyclodiphosphate (ME-2,4cPP) into 1-hydroxy-2-methyl-2-(E)-butenyl 4-diphosphate. The protein is 4-hydroxy-3-methylbut-2-en-1-yl diphosphate synthase (flavodoxin) of Shewanella sediminis (strain HAW-EB3).